The following is a 271-amino-acid chain: 1,4-dihydroxy-2-naphthoyl-CoA synthase (271 aa).

Residues 71–75 (SGGDQ), Tyr-83, 115–119 (YAIGG), Thr-141, Ser-147, Tyr-244, and Lys-259 each bind substrate. A hydrogencarbonate-binding site is contributed by 140–142 (QTG). Positions 250–263 (KEGRDSFKEKRKPD) are enriched in basic and acidic residues. The interval 250-271 (KEGRDSFKEKRKPDFGQFPRFP) is disordered.

This sequence belongs to the enoyl-CoA hydratase/isomerase family. MenB subfamily. The cofactor is hydrogencarbonate.

It catalyses the reaction 2-succinylbenzoyl-CoA + H(+) = 1,4-dihydroxy-2-naphthoyl-CoA + H2O. Its pathway is quinol/quinone metabolism; 1,4-dihydroxy-2-naphthoate biosynthesis; 1,4-dihydroxy-2-naphthoate from chorismate: step 6/7. It functions in the pathway quinol/quinone metabolism; menaquinone biosynthesis. In terms of biological role, converts o-succinylbenzoyl-CoA (OSB-CoA) to 1,4-dihydroxy-2-naphthoyl-CoA (DHNA-CoA). In Bacillus subtilis (strain 168), this protein is 1,4-dihydroxy-2-naphthoyl-CoA synthase.